The following is a 437-amino-acid chain: Glutamate-1-semialdehyde 2,1-aminomutase (437 aa).

The residue at position 274 (Lys274) is an N6-(pyridoxal phosphate)lysine.

It belongs to the class-III pyridoxal-phosphate-dependent aminotransferase family. HemL subfamily. Homodimer. Pyridoxal 5'-phosphate serves as cofactor.

The protein resides in the cytoplasm. The catalysed reaction is (S)-4-amino-5-oxopentanoate = 5-aminolevulinate. It functions in the pathway porphyrin-containing compound metabolism; protoporphyrin-IX biosynthesis; 5-aminolevulinate from L-glutamyl-tRNA(Glu): step 2/2. The sequence is that of Glutamate-1-semialdehyde 2,1-aminomutase from Paracidovorax citrulli (strain AAC00-1) (Acidovorax citrulli).